Here is a 295-residue protein sequence, read N- to C-terminus: Glutamyl-Q tRNA(Asp) synthetase (295 aa).

L-glutamate contacts are provided by residues 5 to 9 and glutamate 41; that span reads RFAPS. The 'HIGH' region signature appears at 8–18; the sequence is PSPTGLLHIGS. Zn(2+) is bound by residues cysteine 97, cysteine 99, tyrosine 117, and cysteine 121. L-glutamate contacts are provided by tyrosine 178 and arginine 196. Residues 234-238 carry the 'KMSKS' region motif; that stretch reads KWSKQ. Lysine 237 contributes to the ATP binding site.

Belongs to the class-I aminoacyl-tRNA synthetase family. GluQ subfamily. Zn(2+) serves as cofactor.

Functionally, catalyzes the tRNA-independent activation of glutamate in presence of ATP and the subsequent transfer of glutamate onto a tRNA(Asp). Glutamate is transferred on the 2-amino-5-(4,5-dihydroxy-2-cyclopenten-1-yl) moiety of the queuosine in the wobble position of the QUC anticodon. The polypeptide is Glutamyl-Q tRNA(Asp) synthetase (Neisseria meningitidis serogroup A / serotype 4A (strain DSM 15465 / Z2491)).